We begin with the raw amino-acid sequence, 219 residues long: UPF0502 protein GSU0233 (219 aa).

The protein belongs to the UPF0502 family.

The polypeptide is UPF0502 protein GSU0233 (Geobacter sulfurreducens (strain ATCC 51573 / DSM 12127 / PCA)).